Here is a 166-residue protein sequence, read N- to C-terminus: Ferric nitrobindin-like protein (166 aa).

Residues 21–27 (GHWEGEG) carry the GXWXGXG motif.

Belongs to the nitrobindin family.

This chain is Ferric nitrobindin-like protein, found in Cutibacterium acnes (strain DSM 16379 / KPA171202) (Propionibacterium acnes).